The primary structure comprises 169 residues: dCTP pyrophosphatase 1 (169 aa).

Residues 1–26 form a disordered region; that stretch reads MSASEEMLGGARGESTTATGPFSFSS. Positions 14-26 are enriched in polar residues; that stretch reads ESTTATGPFSFSS. Residues His37 and 46–50 contribute to the substrate site; that span reads WEQFH. Residues Glu62 and Glu65 each coordinate Mg(2+). Residue Trp72 participates in substrate binding. Ser84 carries the phosphoserine modification. Mg(2+)-binding residues include Glu94 and Asp97. Substrate is bound at residue Tyr101. Residues 143-169 form a disordered region; the sequence is LPHGATSENQAMGPADPASESTGQVST.

In terms of assembly, homotetramer. Mg(2+) is required as a cofactor.

The protein localises to the cytoplasm. Its subcellular location is the cytosol. The enzyme catalyses dCTP + H2O = dCMP + diphosphate + H(+). Its function is as follows. Hydrolyzes deoxynucleoside triphosphates (dNTPs) to the corresponding nucleoside monophosphates. Has a strong preference for dCTP and its analogs including 5-iodo-dCTP and 5-methyl-dCTP for which it may even have a higher efficiency. May protect DNA or RNA against the incorporation of these genotoxic nucleotide analogs through their catabolism. The protein is dCTP pyrophosphatase 1 of Bos taurus (Bovine).